Here is a 340-residue protein sequence, read N- to C-terminus: UDP-3-O-(3-hydroxymyristoyl)glucosamine N-acyltransferase (340 aa).

His239 acts as the Proton acceptor in catalysis.

This sequence belongs to the transferase hexapeptide repeat family. LpxD subfamily. As to quaternary structure, homotrimer.

The enzyme catalyses a UDP-3-O-[(3R)-3-hydroxyacyl]-alpha-D-glucosamine + a (3R)-hydroxyacyl-[ACP] = a UDP-2-N,3-O-bis[(3R)-3-hydroxyacyl]-alpha-D-glucosamine + holo-[ACP] + H(+). The catalysed reaction is UDP-3-O-[(3R)-3-hydroxytetradecanoyl]-alpha-D-glucosamine + (3R)-hydroxytetradecanoyl-[ACP] = UDP-2-N,3-O-bis[(3R)-3-hydroxytetradecanoyl]-alpha-D-glucosamine + holo-[ACP] + H(+). Its pathway is glycolipid biosynthesis; lipid IV(A) biosynthesis; lipid IV(A) from (3R)-3-hydroxytetradecanoyl-[acyl-carrier-protein] and UDP-N-acetyl-alpha-D-glucosamine: step 3/6. Functionally, catalyzes the N-acylation of UDP-3-O-(hydroxytetradecanoyl)glucosamine using 3-hydroxytetradecanoyl-ACP as the acyl donor. Is involved in the biosynthesis of lipid A, a phosphorylated glycolipid that anchors the lipopolysaccharide to the outer membrane of the cell. This chain is UDP-3-O-(3-hydroxymyristoyl)glucosamine N-acyltransferase, found in Yersinia enterocolitica.